Here is a 554-residue protein sequence, read N- to C-terminus: Phosphomethylpyrimidine synthase (554 aa).

Residues Asn-188, Met-217, Tyr-246, His-282, 302–304 (SRG), 343–346 (DGLR), and Glu-382 contribute to the substrate site. A Zn(2+)-binding site is contributed by His-386. Tyr-409 contacts substrate. Zn(2+) is bound at residue His-450. 3 residues coordinate [4Fe-4S] cluster: Cys-530, Cys-533, and Cys-538.

Belongs to the ThiC family. Homodimer. The cofactor is [4Fe-4S] cluster.

The catalysed reaction is 5-amino-1-(5-phospho-beta-D-ribosyl)imidazole + S-adenosyl-L-methionine = 4-amino-2-methyl-5-(phosphooxymethyl)pyrimidine + CO + 5'-deoxyadenosine + formate + L-methionine + 3 H(+). The protein operates within cofactor biosynthesis; thiamine diphosphate biosynthesis. Its function is as follows. Catalyzes the synthesis of the hydroxymethylpyrimidine phosphate (HMP-P) moiety of thiamine from aminoimidazole ribotide (AIR) in a radical S-adenosyl-L-methionine (SAM)-dependent reaction. This chain is Phosphomethylpyrimidine synthase, found in Coxiella burnetii (strain RSA 493 / Nine Mile phase I).